The chain runs to 656 residues: Heparan-alpha-glucosaminide N-acetyltransferase (656 aa).

Residues 1-31 form a disordered region; sequence MTGGSSSRRRRAEERSSAAGTERNSRREAVG. The Lumenal, vesicle portion of the chain corresponds to 1 to 185; it reads MTGGSSSRRR…IIVNENPVDS (185 aa). N-linked (GlcNAc...) asparagine glycans are attached at residues Asn137 and Asn157. Residues Cys146 and Cys455 are joined by a disulfide bond. The helical transmembrane segment at 186 to 206 threads the bilayer; it reads NLPVSIAFLVGLALIVAVSLL. Topologically, residues 207 to 268 are cytoplasmic; the sequence is RLLLSLDDVN…NRLRCVDTFR (62 aa). A disordered region spans residues 234 to 253; the sequence is SELGSPSRADPLSADYQPET. Ser238 and Ser240 each carry phosphoserine. Tyr249 carries the phosphotyrosine modification. Residues 269-289 form a helical membrane-spanning segment; sequence GLALVLMVFVNYGGGKYWYFK. Residue His290 is part of the active site. Topologically, residues 290 to 295 are lumenal, vesicle; that stretch reads HSSWNG. A helical transmembrane segment spans residues 296 to 316; the sequence is LTVADLVFPWFVFIMGTSIFL. Topologically, residues 317 to 338 are cytoplasmic; the sequence is SMTSILQRGCSKLKLLGKIVWR. Residues 339 to 359 form a helical membrane-spanning segment; sequence SFLLICIGVIIVNPNYCLGPL. Topologically, residues 360 to 367 are lumenal, vesicle; that stretch reads SWDKVRIP. Residues 368-388 form a helical membrane-spanning segment; the sequence is GVLQRLGVTYFVVAVLEFFFW. Topologically, residues 389 to 413 are cytoplasmic; it reads KPVPDSCTLESSCFSLRDITSSWPQ. A helical membrane pass occupies residues 414 to 434; sequence WLTILTLESIWLALTFFLPVP. The Lumenal, vesicle segment spans residues 435-493; sequence GCPTGYLGPGGIGDLGKYPHCTGGAAGYIDRLLLGDNHLYQHPSSTVLYHTEVAYDPEG. A helical membrane pass occupies residues 494–514; that stretch reads VLGTINSIVMAFLGVQAGKIL. Over 515-522 the chain is Cytoplasmic; sequence VYYKDQTK. A helical transmembrane segment spans residues 523–543; that stretch reads AILTRFAAWCCILGLISIVLT. The Lumenal, vesicle segment spans residues 544-557; that stretch reads KVSANEGFIPINKN. Residues 558-578 form a helical membrane-spanning segment; it reads LWSISYVTTLSCFAFFILLIL. The Cytoplasmic portion of the chain corresponds to 579–585; that stretch reads YPVVDVK. The chain crosses the membrane as a helical span at residues 586 to 606; sequence GLWTGTPFFYPGMNSILVYVG. At 607–627 the chain is on the lumenal, vesicle side; the sequence is HEVLENYFPFQWKLADEQSHK. Residues 628–648 traverse the membrane as a helical segment; that stretch reads EHLIQNIVATALWVLIAYVLY. The interval 641-656 is lysosomal targeting region; it reads VLIAYVLYKKKLFWKI. Residues 649–656 lie on the Cytoplasmic side of the membrane; sequence KKKLFWKI.

As to quaternary structure, homooligomer. Homooligomerization is necessary for enzyme activity. In terms of processing, undergoes intralysosomal proteolytic cleavage; occurs within the end of the first and/or the beginning of the second luminal domain and is essential for the activation of the enzyme. Glycosylated. Expressed in the retina.

It localises to the lysosome membrane. It carries out the reaction alpha-D-glucosaminyl-[heparan sulfate](n) + acetyl-CoA = N-acetyl-alpha-D-glucosaminyl-[heparan sulfate](n) + CoA + H(+). Functionally, lysosomal acetyltransferase that acetylates the non-reducing terminal alpha-glucosamine residue of intralysosomal heparin or heparan sulfate, converting it into a substrate for luminal alpha-N-acetyl glucosaminidase. This Mus musculus (Mouse) protein is Heparan-alpha-glucosaminide N-acetyltransferase (Hgsnat).